The following is a 297-amino-acid chain: Urease accessory protein UreD 2 (297 aa).

Belongs to the UreD family. UreD, UreF and UreG form a complex that acts as a GTP-hydrolysis-dependent molecular chaperone, activating the urease apoprotein by helping to assemble the nickel containing metallocenter of UreC. The UreE protein probably delivers the nickel.

Its subcellular location is the cytoplasm. Functionally, required for maturation of urease via the functional incorporation of the urease nickel metallocenter. The polypeptide is Urease accessory protein UreD 2 (Methylorubrum populi (strain ATCC BAA-705 / NCIMB 13946 / BJ001) (Methylobacterium populi)).